Consider the following 118-residue polypeptide: Small ribosomal subunit protein uS13 (118 aa).

A disordered region spans residues K92 to K118.

It belongs to the universal ribosomal protein uS13 family. As to quaternary structure, part of the 30S ribosomal subunit. Forms a loose heterodimer with protein S19. Forms two bridges to the 50S subunit in the 70S ribosome.

Functionally, located at the top of the head of the 30S subunit, it contacts several helices of the 16S rRNA. In the 70S ribosome it contacts the 23S rRNA (bridge B1a) and protein L5 of the 50S subunit (bridge B1b), connecting the 2 subunits; these bridges are implicated in subunit movement. Contacts the tRNAs in the A and P-sites. The protein is Small ribosomal subunit protein uS13 of Wigglesworthia glossinidia brevipalpis.